The sequence spans 129 residues: Glycine cleavage system H protein (129 aa).

The Lipoyl-binding domain maps to 24 to 106 (SYTVGITEHA…YGEGWFFRVM (83 aa)). Lys65 carries the N6-lipoyllysine modification.

This sequence belongs to the GcvH family. In terms of assembly, the glycine cleavage system is composed of four proteins: P, T, L and H. (R)-lipoate is required as a cofactor.

In terms of biological role, the glycine cleavage system catalyzes the degradation of glycine. The H protein shuttles the methylamine group of glycine from the P protein to the T protein. This Shewanella baltica (strain OS185) protein is Glycine cleavage system H protein.